The primary structure comprises 409 residues: Short chain dehydrogenase sirS (409 aa).

Positions 49, 68, 195, 288, 290, and 299 each coordinate NADP(+). A disordered region spans residues 306–332; it reads GVGPEGAGEEEGKGEAEGGAKGATGWS.

This sequence belongs to the short-chain dehydrogenases/reductases (SDR) family. Highly divergent.

Its pathway is mycotoxin biosynthesis. Its function is as follows. Short chain dehydrogenase; part of the gene cluster that mediates the biosynthesis of sirodesmin PL, an epipolythiodioxopiperazine (ETP) characterized by a disulfide bridged cyclic dipeptide and that acts as a phytotoxin which is involved in the blackleg didease of canola. SirD catalyzes the O-prenylation of L-tyrosine (L-Tyr) in the presence of dimethylallyl diphosphate (DMAPP) to yield 4-O-dimethylallyl-L-Tyr, and therefore represents probably the first pathway-specific enzyme in the biosynthesis of sirodesmin PL. 4-O-dimethylallyl-L-Tyr, then undergoes condensation with L-Ser in a reaction catalyzed by the non-ribosomal peptide synthase sirP to form the diketopiperazine (DKP) backbone. Further bishydroxylation of the DKP performed by the cytochrome P450 monooxygenase sirC leads to the production of the intermediate phomamide. This step is essential to form the reactive thiol group required for toxicity of sirodesmin PL. The next steps of sirodesmin biosynthesis are not well understood yet, but some predictions could be made from intermediate compounds identification. Phomamide is converted into phomalizarine via oxidation, probably by sirT. Further oxidation, methylation (by sirM or sirN) and reduction steps convert phomalizarine to deacetyl sirodesmin. Finally, acetyltransferase sirH probably acetylates deacetyl sirodesmin to produce sirodesmin PL. This Leptosphaeria maculans (Blackleg fungus) protein is Short chain dehydrogenase sirS.